We begin with the raw amino-acid sequence, 250 residues long: 5'-nucleotidase SurE (250 aa).

A divalent metal cation is bound by residues Asp8, Asp9, Ser40, and Asn94.

The protein belongs to the SurE nucleotidase family. It depends on a divalent metal cation as a cofactor.

The protein resides in the cytoplasm. The catalysed reaction is a ribonucleoside 5'-phosphate + H2O = a ribonucleoside + phosphate. Functionally, nucleotidase that shows phosphatase activity on nucleoside 5'-monophosphates. In Wolbachia pipientis wMel, this protein is 5'-nucleotidase SurE.